Reading from the N-terminus, the 141-residue chain is Putative pre-16S rRNA nuclease (141 aa).

It belongs to the YqgF nuclease family.

It localises to the cytoplasm. Could be a nuclease involved in processing of the 5'-end of pre-16S rRNA. In Roseiflexus sp. (strain RS-1), this protein is Putative pre-16S rRNA nuclease.